Here is a 575-residue protein sequence, read N- to C-terminus: Interleukin-1 receptor-like 2 (575 aa).

A signal peptide spans 1-19; sequence MWSLLLCGLSIALPLSVTA. Ig-like C2-type domains lie at 20 to 111, 126 to 211, and 222 to 318; these read DGCK…VNLT, PNLS…VLNG, and YGGS…MCHA. The Extracellular segment spans residues 20-335; that stretch reads DGCKDIFMKN…ILQLPAPDFR (316 aa). Asparagine 41, asparagine 59, asparagine 109, asparagine 127, asparagine 184, asparagine 234, asparagine 250, asparagine 266, and asparagine 299 each carry an N-linked (GlcNAc...) asparagine glycan. Cysteines 42 and 95 form a disulfide. Cysteines 146 and 195 form a disulfide. Cysteine 249 and cysteine 316 are joined by a disulfide. A helical transmembrane segment spans residues 336-356; that stretch reads AYLIGGLIALVAVAVSVVYIY. The Cytoplasmic segment spans residues 357-575; the sequence is NIFKIDIVLW…RRKKCTLTTG (219 aa). Positions 381–536 constitute a TIR domain; sequence KLYDAYVLYP…KFWKTVRYHM (156 aa). Glutamate 467 is an active-site residue.

The protein belongs to the interleukin-1 receptor family. As to quaternary structure, interacts with IL1RAP; the association is enhanced by IL36B indicative for an functional signaling complex and inhibited by IL36RN. Expressed in synovial fibroblasts and articular chondrocytes. Expressed in keratinocytes and monocyte-derived dendritic cells. Expressed in monocytes and myeloid dendritic cells; at protein level.

Its subcellular location is the membrane. It carries out the reaction NAD(+) + H2O = ADP-D-ribose + nicotinamide + H(+). Functionally, receptor for interleukin-36 (IL36A, IL36B and IL36G). After binding to interleukin-36 associates with the coreceptor IL1RAP to form the interleukin-36 receptor complex which mediates interleukin-36-dependent activation of NF-kappa-B, MAPK and other pathways. The IL-36 signaling system is thought to be present in epithelial barriers and to take part in local inflammatory response; it is similar to the IL-1 system. Seems to be involved in skin inflammatory response by induction of the IL-23/IL-17/IL-22 pathway. The sequence is that of Interleukin-1 receptor-like 2 (IL1RL2) from Homo sapiens (Human).